A 495-amino-acid polypeptide reads, in one-letter code: Rho GTPase-activating protein 19 (495 aa).

One can recognise a Rho-GAP domain in the interval 98–304; it reads MSLKRKEKGV…FMIKHSQKLF (207 aa). Disordered regions lie at residues 327–362 and 393–495; these read KDDL…ETQQ and KHPS…SSSL. Basic and acidic residues-rich tracts occupy residues 350–362, 433–452, and 470–481; these read SRLD…ETQQ, QERK…KENV, and KSLEGQKEESCR.

In terms of biological role, GTPase activator for the Rho-type GTPases by converting them to an inactive GDP-bound state. The sequence is that of Rho GTPase-activating protein 19 (ARHGAP19) from Gallus gallus (Chicken).